The primary structure comprises 427 residues: Gustatory receptor for sugar taste 43a (427 aa).

At 1 to 37 (MEISQPSIGIFYISKVLALAPYATVRNSKGRVEIGRS) the chain is on the cytoplasmic side. Residues 38-63 (WLFTVYSATLTVVMVFLTYRGLLFDA) traverse the membrane as a helical segment. The Extracellular portion of the chain corresponds to 64–75 (NSEIPVRMKSAT). 2 residues coordinate beta-D-fructose: arginine 70 and aspartate 83. Residues 76–96 (SKVVTALDVSVVVMAIVSGVY) traverse the membrane as a helical segment. Over 97-135 (CGLFSLNDTLELNDRLNKIDNTLNAYNNFRRDRWRALGM) the chain is Cytoplasmic. The chain crosses the membrane as a helical span at residues 136–158 (AAVSLLAISILVGLDVGTWMRIA). Over 159 to 168 (QDMNIAQSDT) the chain is Extracellular. A helical transmembrane segment spans residues 169–193 (ELNVHWYIPFYSLYFILTGLQVNIA). Tyrosine 182 is a beta-D-fructose binding site. Residues 194–293 (NTAYGLGRRF…CVHLLSNSFG (100 aa)) are Cytoplasmic-facing. The chain crosses the membrane as a helical span at residues 294–316 (IAVLFILVSCLLHLVATAYFLFL). Position 310 (threonine 310) interacts with beta-D-fructose. Residues 317–324 (ELLSKRDN) are Extracellular-facing. A helical transmembrane segment spans residues 325-346 (GYLWVQMLWICFHFLRLLMVVE). Residue histidine 337 participates in beta-D-fructose binding. Residues 347–402 (PCHLAARESRKTIQIVCEIERKVHEPILAEAVKKFWQQLLVVDADFSACGLCRVNR) are Cytoplasmic-facing. A helical transmembrane segment spans residues 403-423 (TILTSFASAIATYLVILIQFQ). Glutamine 421 is a Ca(2+) binding site. At 424 to 427 (RTNG) the chain is on the extracellular side.

This sequence belongs to the insect chemoreceptor superfamily. Gustatory receptor (GR) family. Gr21a subfamily. In terms of assembly, homotetramer. As to expression, expressed in the adult labellar chemosensory neurons and in the adult head, abdomen, leg and wing. In larvae, is expressed in taste organs, as well as the brain and the gastrointestinal system.

Its subcellular location is the cell membrane. In terms of biological role, gustatory receptor which mediates acceptance or avoidance behavior, depending on its substrates. Gr43a is the main sugar receptor in larvae. Functions as a narrowly tuned fructose receptor in taste neurons but also as a fructose receptor in the brain. Necessary and sufficient to sense hemolymph fructose and promote feeding in hungry flies but suppress feeding in satiated flies. This Drosophila melanogaster (Fruit fly) protein is Gustatory receptor for sugar taste 43a (Gr43a).